The following is a 219-amino-acid chain: Proteasome subunit beta type-9 (219 aa).

Positions 1–20 (MLRAGAPTGDLPRAGEVHTG) are cleaved as a propeptide — removed in mature form. Residue Thr-21 is the Nucleophile of the active site. An N6-acetyllysine mark is found at Lys-53 and Lys-109.

Belongs to the peptidase T1B family. As to quaternary structure, the 26S proteasome consists of a 20S proteasome core and two 19S regulatory subunits. The 20S proteasome core is composed of 28 subunits that are arranged in four stacked rings, resulting in a barrel-shaped structure. The two end rings are each formed by seven alpha subunits, and the two central rings are each formed by seven beta subunits. The catalytic chamber with the active sites is on the inside of the barrel. Component of the immunoproteasome, where it displaces the equivalent housekeeping subunit PSMB6. Component of the spermatoproteasome, a form of the proteasome specifically found in testis. (Microbial infection) Interacts with HIV-1 TAT protein. In terms of processing, autocleaved. The resulting N-terminal Thr residue of the mature subunit is responsible for the nucleophile proteolytic activity.

The protein localises to the cytoplasm. Its subcellular location is the nucleus. It carries out the reaction Cleavage of peptide bonds with very broad specificity.. The proteasome is a multicatalytic proteinase complex which is characterized by its ability to cleave peptides with Arg, Phe, Tyr, Leu, and Glu adjacent to the leaving group at neutral or slightly basic pH. The proteasome has an ATP-dependent proteolytic activity. This subunit is involved in antigen processing to generate class I binding peptides. Replacement of PSMB6 by PSMB9 increases the capacity of the immunoproteasome to cleave model peptides after hydrophobic and basic residues. The protein is Proteasome subunit beta type-9 (PSMB9) of Homo sapiens (Human).